Here is an 85-residue protein sequence, read N- to C-terminus: MLTIRLALGGSKKRPFYHLTVTDSRNARDGSHKEQVGFFNPVARGQEIRLSVNEERVNYWLSVGAQTSERVAQLLKEHNKTKAAA.

It belongs to the bacterial ribosomal protein bS16 family.

The chain is Small ribosomal subunit protein bS16 from Pseudomonas savastanoi pv. phaseolicola (strain 1448A / Race 6) (Pseudomonas syringae pv. phaseolicola (strain 1448A / Race 6)).